Consider the following 95-residue polypeptide: Class II hydrophobin 3 (95 aa).

Positions Met1–Ala16 are cleaved as a signal peptide. Intrachain disulfides connect Cys28–Cys77, Cys38–Cys68, Cys39–Cys51, and Cys78–Cys89.

Belongs to the cerato-ulmin hydrophobin family.

Its subcellular location is the secreted. It localises to the cell wall. In terms of biological role, aerial growth, conidiation, and dispersal of filamentous fungi in the environment rely upon a capability of their secreting small amphipathic proteins called hydrophobins (HPBs) with low sequence identity. Class I can self-assemble into an outermost layer of rodlet bundles on aerial cell surfaces, conferring cellular hydrophobicity that supports fungal growth, development and dispersal; whereas Class II form highly ordered films at water-air interfaces through intermolecular interactions but contribute nothing to the rodlet structure. Hyd3 plays a neglectable role in hyphal growth and asexual development and does not seem involved in cellular hydrophobicity, conidial adhesion, stress tolerance nor insect pathogenicity. The protein is Class II hydrophobin 3 of Metarhizium robertsii (strain ARSEF 23 / ATCC MYA-3075) (Metarhizium anisopliae (strain ARSEF 23)).